The chain runs to 258 residues: Aquaglyceroporin (258 aa).

At 1–16 the chain is on the cytoplasmic side; sequence MKVTFGNEYIKNFLGE. The helical transmembrane segment at 17–37 threads the bilayer; it reads FIGTFVLMFLGEGTTANHFAV. Residues 38–45 lie on the Extracellular side of the membrane; it reads PIKNDWLR. A helical membrane pass occupies residues 46–66; the sequence is LCIGWGLGVFFGILISAKLSG. Glycerol is bound by residues alanine 67 and asparagine 70. At 67-87 the chain is on the cytoplasmic side; the sequence is AHLNLAVTVGLSTIKKFNYKQ. Residues 88–108 traverse the membrane as a helical segment; it reads IPLYFAGQLLGALSATASVYG. Over 109 to 133 the chain is Extracellular; sequence LYYGFVSDQTIPKFSWETGKHANVH. A helical membrane pass occupies residues 134–154; that stretch reads IASAFMHEFILTGILLLIILS. Over 155-171 the chain is Cytoplasmic; the sequence is VTDENICGKFHVLKVSS. A helical membrane pass occupies residues 172-192; sequence IVGLAIICIGISFGGNTGFAL. Residues glycine 189, phenylalanine 190, asparagine 193, and arginine 196 each coordinate glycerol. At 193–217 the chain is on the extracellular side; that stretch reads NPSRDLGARILSAIAYGFEAFTRDK. Residues 218-238 traverse the membrane as a helical segment; it reads CYFWIPLIAPIIGSIIFCQIY. The Cytoplasmic segment spans residues 239–258; sequence DKIVAPLVVISEHDKGALEI.

It belongs to the MIP/aquaporin (TC 1.A.8) family.

The protein resides in the cell membrane. The enzyme catalyses H2O(in) = H2O(out). The catalysed reaction is glycerol(in) = glycerol(out). It carries out the reaction urea(in) = urea(out). Functionally, mediates water and glycerol transport across the cell membrane. Permeable to urea. Required for efficient progression of parasites through the liver stages. This Plasmodium berghei (strain Anka) protein is Aquaglyceroporin.